We begin with the raw amino-acid sequence, 236 residues long: Ribosomal RNA small subunit methyltransferase G (236 aa).

S-adenosyl-L-methionine-binding positions include G80, 131–132, and R148; that span reads AE.

This sequence belongs to the methyltransferase superfamily. RNA methyltransferase RsmG family.

Its subcellular location is the cytoplasm. Functionally, specifically methylates the N7 position of a guanine in 16S rRNA. The chain is Ribosomal RNA small subunit methyltransferase G from Ureaplasma parvum serovar 3 (strain ATCC 27815 / 27 / NCTC 11736).